The chain runs to 559 residues: MENVQDFIISILRANPSLRDTRSFLASFGPRPTKLFQEQQSQDIIIPPPPSTPPASTTATPTIPIQPTPSPVITSILNPVYNRTALVKIQGPFTDVQLDSITRGLVYLSKLGLVSVIVVDNDNQPRGDQDERRVIIDEVMRVVSSLEKHGARARPITGAIVRLGPKPGSEDPTSELDFTPPETHTLPPDLTPLRSALRAGEIPVVSPFALDSFCRSVRVDSNDVIAGLSADAPSDFSKEVELAPFRLMIINRHGGIPSYARSGYPHLLINLSSEYQHIHETFREEWRHTHPSALSNLALARTCLAYMPPTSSAIMVSHKSPSSLIGNLITNKPAVSSSLPHALLQGNQRLTPHTPTLLRRGLPVQVFHSVSDIDKIKLNALLEQSFGRKLDSASFYARLEKKLDFVIVAGDYVGAAIVTNEDDPVSGKPISYLDKFAVLPSHQGDGTVDFLWVALHDETYGLGHPFSANPNGGKGGKGEGRDLVWRSRSKNPVNKWYFDRSSGHLRMGSWVLFWCDAEKRLKIEEGRRGSAGLSYVEDWEEGRLRTWAEAVSGIPSSWM.

Positions 162–188 (RLGPKPGSEDPTSELDFTPPETHTLPP) are disordered. The N-acetyltransferase domain maps to 362–538 (LPVQVFHSVS…GSAGLSYVED (177 aa)).

Belongs to the acetyltransferase family.

The protein localises to the mitochondrion. It carries out the reaction L-glutamate + acetyl-CoA = N-acetyl-L-glutamate + CoA + H(+). Its pathway is amino-acid biosynthesis; L-arginine biosynthesis; N(2)-acetyl-L-ornithine from L-glutamate: step 1/4. In terms of biological role, N-acetylglutamate synthase involved in arginine biosynthesis. In Laccaria bicolor (strain S238N-H82 / ATCC MYA-4686) (Bicoloured deceiver), this protein is Amino-acid acetyltransferase, mitochondrial (ARG2).